A 237-amino-acid polypeptide reads, in one-letter code: Cyclic nucleotide phosphodiesterase inhibitor (237 aa).

An N-terminal signal peptide occupies residues 1 to 20; it reads MAKIIISLILLLSLFSFSYG. Residues asparagine 28, asparagine 65, and asparagine 70 are each glycosylated (N-linked (GlcNAc...) asparagine). Cys-rich CT repeat units lie at residues 57 to 81, 82 to 105, 116 to 139, 140 to 162, and 163 to 186; these read DLCH…CNDN, NPCT…CDPG, DPCT…CNDG, DACT…CDDN, and DPCT…CSIK. Asparagine 153 carries an N-linked (GlcNAc...) asparagine glycan. N-linked (GlcNAc...) asparagine glycosylation occurs at asparagine 207.

Functionally, PDI acts by binding stoichiometrically to cyclic nucleotide phosphodiesterase, changing the KM of the enzyme for cAMP from 10 uM to 2 mM. The polypeptide is Cyclic nucleotide phosphodiesterase inhibitor (pdiA) (Dictyostelium discoideum (Social amoeba)).